The following is a 274-amino-acid chain: Eukaryotic translation initiation factor 3 subunit G (274 aa).

An RRM domain is found at 192–270; it reads TAIRISNLSN…LILNVEWSKP (79 aa).

The protein belongs to the eIF-3 subunit G family. Component of the eukaryotic translation initiation factor 3 (eIF-3) complex.

It is found in the cytoplasm. Its function is as follows. RNA-binding component of the eukaryotic translation initiation factor 3 (eIF-3) complex, which is involved in protein synthesis of a specialized repertoire of mRNAs and, together with other initiation factors, stimulates binding of mRNA and methionyl-tRNAi to the 40S ribosome. The eIF-3 complex specifically targets and initiates translation of a subset of mRNAs involved in cell proliferation. This subunit can bind 18S rRNA. The polypeptide is Eukaryotic translation initiation factor 3 subunit G (Bombyx mori (Silk moth)).